A 153-amino-acid chain; its full sequence is Superoxide dismutase [Cu-Zn] (153 aa).

Residues H45, H47, and H62 each contribute to the Cu cation site. A disulfide bridge connects residues C56 and C145. Zn(2+)-binding residues include H62, H70, H79, and D82. Cu cation is bound at residue H119.

Belongs to the Cu-Zn superoxide dismutase family. Homodimer. Cu cation is required as a cofactor. Zn(2+) serves as cofactor.

The protein resides in the cytoplasm. The enzyme catalyses 2 superoxide + 2 H(+) = H2O2 + O2. Functionally, destroys radicals which are normally produced within the cells and which are toxic to biological systems. In Drosophila virilis (Fruit fly), this protein is Superoxide dismutase [Cu-Zn].